Here is a 64-residue protein sequence, read N- to C-terminus: DNA-directed RNA polymerase subunit Rpo10 (64 aa).

Zn(2+)-binding residues include C7, C10, C45, and C46.

Belongs to the archaeal Rpo10/eukaryotic RPB10 RNA polymerase subunit family. Part of the RNA polymerase complex. Zn(2+) serves as cofactor.

It localises to the cytoplasm. The enzyme catalyses RNA(n) + a ribonucleoside 5'-triphosphate = RNA(n+1) + diphosphate. Functionally, DNA-dependent RNA polymerase (RNAP) catalyzes the transcription of DNA into RNA using the four ribonucleoside triphosphates as substrates. This Halorubrum lacusprofundi (strain ATCC 49239 / DSM 5036 / JCM 8891 / ACAM 34) protein is DNA-directed RNA polymerase subunit Rpo10.